The primary structure comprises 435 residues: Aspartate aminotransferase (435 aa).

Pyridoxal 5'-phosphate-binding positions include Tyr69 and 100 to 101; that span reads SL. 139–141 is a binding site for substrate; the sequence is YDR. Pyridoxal 5'-phosphate is bound by residues Asn189, Tyr221, and 254 to 256; that span reads STS. Arg392 lines the substrate pocket.

Belongs to the class-I pyridoxal-phosphate-dependent aminotransferase family. Pyridoxal 5'-phosphate is required as a cofactor.

It catalyses the reaction L-aspartate + 2-oxoglutarate = oxaloacetate + L-glutamate. In terms of biological role, main aspartate aminotransferase that couples nitrogen assimilation to aspartate synthesis. Has a weak, but significant, side activity toward kynurenine (Kyn). Oxaloacetate and 2-oxoglutarate, but not pyruvate, serve as amino acceptors, while Asp, Glu and Kyn serve as the best amino donors. Essential for axenic growth and survival of M.tuberculosis in macrophages and in mice. The polypeptide is Aspartate aminotransferase (Mycobacterium tuberculosis (strain ATCC 25618 / H37Rv)).